The following is a 407-amino-acid chain: Succinyl-diaminopimelate desuccinylase (407 aa).

The span at 1-10 (MSDIDNNLTS) shows a compositional bias: polar residues. Positions 1–20 (MSDIDNNLTSQTHQQATHQQ) are disordered. A compositionally biased stretch (low complexity) spans 11–20 (QTHQQATHQQ). Zn(2+) is bound at residue His-93. Residue Asp-95 is part of the active site. Asp-126 is a binding site for Zn(2+). Glu-160 serves as the catalytic Proton acceptor. Residues Glu-161, Glu-189, and His-379 each contribute to the Zn(2+) site.

The protein belongs to the peptidase M20A family. DapE subfamily. In terms of assembly, homodimer. It depends on Zn(2+) as a cofactor. The cofactor is Co(2+).

It catalyses the reaction N-succinyl-(2S,6S)-2,6-diaminopimelate + H2O = (2S,6S)-2,6-diaminopimelate + succinate. It participates in amino-acid biosynthesis; L-lysine biosynthesis via DAP pathway; LL-2,6-diaminopimelate from (S)-tetrahydrodipicolinate (succinylase route): step 3/3. Catalyzes the hydrolysis of N-succinyl-L,L-diaminopimelic acid (SDAP), forming succinate and LL-2,6-diaminopimelate (DAP), an intermediate involved in the bacterial biosynthesis of lysine and meso-diaminopimelic acid, an essential component of bacterial cell walls. This chain is Succinyl-diaminopimelate desuccinylase, found in Psychrobacter arcticus (strain DSM 17307 / VKM B-2377 / 273-4).